Here is a 256-residue protein sequence, read N- to C-terminus: MVKSHIGSWILVLFVAMWSDVALCKKRPKPGGGWNTGGSRYPGQGSPGGNRYPPQEGGDWGQPHGGGWGQPHVGGWGQPHGGGWGQPHGGGGWGQGGTHGQWNKPSKPKTNMKHVAGAAAAGAVVGGLGGYMLGSAMSRPLIHFGSDYEDRYYRENMYRYPNQVYYRPVDQYSNQNNFVHDCVNITVKQHTVTTTTKGENFTETDIKMMERVVEQMCITQYQRESEAYYQRGASVILFSSPPVILLISFLIFLIVG.

The signal sequence occupies residues 1-24; the sequence is MVKSHIGSWILVLFVAMWSDVALC. The interaction with GRB2, ERI3 and SYN1 stretch occupies residues 25–233; the sequence is KKRPKPGGGW…ESEAYYQRGA (209 aa). The disordered stretch occupies residues 28 to 110; the sequence is PKPGGGWNTG…QWNKPSKPKT (83 aa). Repeat copies occupy residues 54 to 62, 63 to 70, 71 to 78, 79 to 86, and 87 to 95. The interval 54-95 is 5 X 8 AA tandem repeats of P-H-G-G-G-W-G-Q; the sequence is PQEGGDWGQPHGGGWGQPHVGGWGQPHGGGWGQPHGGGGWGQ. Gly residues predominate over residues 58–99; it reads GDWGQPHGGGWGQPHVGGWGQPHGGGWGQPHGGGGWGQGGTH. Residues His64, Gly65, Gly66, His72, Gly74, His80, Gly81, Gly82, His88, Gly90, and Gly91 each contribute to the Cu(2+) site. A disulfide bridge links Cys182 with Cys217. Residues Asn184 and Asn200 are each glycosylated (N-linked (GlcNAc...) asparagine). Residue Ala233 is the site of GPI-anchor amidated alanine attachment. The propeptide at 234 to 256 is removed in mature form; that stretch reads SVILFSSPPVILLISFLIFLIVG.

Belongs to the prion family. In terms of assembly, monomer and homodimer. Has a tendency to aggregate into amyloid fibrils containing a cross-beta spine, formed by a steric zipper of superposed beta-strands. Soluble oligomers may represent an intermediate stage on the path to fibril formation. Copper binding may promote oligomerization. Interacts with GRB2, APP, ERI3/PRNPIP and SYN1. Mislocalized cytosolically exposed PrP interacts with MGRN1; this interaction alters MGRN1 subcellular location and causes lysosomal enlargement. Interacts with KIAA1191.

It localises to the cell membrane. The protein localises to the golgi apparatus. Functionally, its primary physiological function is unclear. Has cytoprotective activity against internal or environmental stresses. May play a role in neuronal development and synaptic plasticity. May be required for neuronal myelin sheath maintenance. May play a role in iron uptake and iron homeostasis. Soluble oligomers are toxic to cultured neuroblastoma cells and induce apoptosis (in vitro). Association with GPC1 (via its heparan sulfate chains) targets PRNP to lipid rafts. Also provides Cu(2+) or Zn(2+) for the ascorbate-mediated GPC1 deaminase degradation of its heparan sulfate side chains. The sequence is that of Major prion protein 2 from Tragelaphus strepsiceros (Greater kudu).